The following is a 762-amino-acid chain: Primary amine oxidase, lung isozyme (762 aa).

A signal peptide spans Met-1–Gly-16. Positions Gly-23–Asp-54 are disordered. N-linked (GlcNAc...) asparagine glycosylation occurs at Asn-136. Cys-197 and Cys-198 form a disulfide bridge. Thr-211 is a glycosylation site (O-linked (GalNAc...) threonine). 2 N-linked (GlcNAc...) asparagine glycosylation sites follow: Asn-231 and Asn-293. Residue Tyr-383 to Phe-393 participates in substrate binding. Residue Asp-385 is the Proton acceptor of the active site. A disulfide bridge connects residues Cys-403 and Cys-429. Substrate is bound at residue Leu-467–Tyr-472. The Schiff-base intermediate with substrate; via topaquinone role is filled by Tyr-470. A 2',4',5'-topaquinone modification is found at Tyr-470. Residues His-519 and His-521 each contribute to the Cu cation site. Ca(2+) is bound by residues Asp-528, Leu-529, Asp-530, and Glu-571. Pro-577–Arg-584 contributes to the heparin binding site. The N-linked (GlcNAc...) asparagine glycan is linked to Asn-617. 2 residues coordinate Ca(2+): Phe-662 and Asn-664. Asn-665 carries N-linked (GlcNAc...) asparagine glycosylation. Glu-666, Asp-672, and Leu-673 together coordinate Ca(2+). Cu cation is bound at residue His-683. Cys-733 and Cys-740 are joined by a disulfide.

The protein belongs to the copper/topaquinone oxidase family. In terms of assembly, homodimer; disulfide-linked. Requires Cu cation as cofactor. It depends on Ca(2+) as a cofactor. L-topaquinone serves as cofactor. Topaquinone (TPQ) is generated by copper-dependent autoxidation of a specific tyrosyl residue. Expressed in lung, spleen, heart and kidney.

It localises to the secreted. It is found in the extracellular space. The enzyme catalyses a primary methyl amine + O2 + H2O = an aldehyde + H2O2 + NH4(+). In Bos taurus (Bovine), this protein is Primary amine oxidase, lung isozyme.